The following is a 468-amino-acid chain: Zinc transporter SLC39A7 (468 aa).

A helical membrane pass occupies residues Trp-10–Gly-30. Basic and acidic residues-rich tracts occupy residues Arg-36–His-56 and His-64–His-100. Residues Arg-36 to Ala-116 are disordered. A Pros-methylhistidine modification is found at His-64. The next 3 membrane-spanning stretches (helical) occupy residues Ala-132–Val-152, Leu-163–Ile-183, and Gly-208–Glu-228. The segment covering Gly-237–His-248 has biased composition (basic residues). The interval Gly-237–Asp-313 is disordered. Basic and acidic residues predominate over residues Ser-249 to Ser-312. Transmembrane regions (helical) follow at residues Leu-385–Val-405, Val-409–Val-429, and Ser-447–Leu-467.

This sequence belongs to the ZIP transporter (TC 2.A.5) family. KE4/Catsup subfamily. As to quaternary structure, homodimer. Post-translationally, rapidly phosphorylated by CK2 following Zn(2+) treatment. This phosphorylation is required for efficient cytosolic Zn(2+) release.

It localises to the endoplasmic reticulum membrane. It is found in the golgi apparatus. The protein resides in the cis-Golgi network membrane. It carries out the reaction Zn(2+)(in) = Zn(2+)(out). In terms of biological role, transports Zn(2+) from the endoplasmic reticulum (ER)/Golgi apparatus to the cytosol, playing an essential role in the regulation of cytosolic zinc levels. Acts as a gatekeeper of zinc release from intracellular stores, requiring post-translational activation by phosphorylation on residues, resulting in activation of multiple downstream pathways leading to cell growth and proliferation. Has an essential role in B cell development and is required for proper B cell receptor signaling. Plays an important role in maintaining intestinal epithelial homeostasis and skin dermis development by regulating ER function. Controls cell signaling pathways involved in glucose metabolism in skeletal muscle. Has a protective role against ER stress in different biological contexts. Mediates Zn(2+)-induced ferroptosis. This chain is Zinc transporter SLC39A7, found in Rattus norvegicus (Rat).